The primary structure comprises 401 residues: Protein IQ-DOMAIN 24 (401 aa).

Residues 1–48 (MGFFGRLFGSKKQEKATPNRRRWSFATRSSHPENDSSSHSSKRRGDED) form a disordered region. The tract at residues 105 to 121 (EYKAAMKIQSAFRGYLA) is calmodulin-binding. 2 consecutive IQ domains span residues 105 to 133 (EYKA…ALVK) and 134 to 156 (LQAL…RMQT). Low complexity-rich tracts occupy residues 165 to 176 (RASRSSHVSDSS) and 278 to 287 (RSRTGSSSGG). 2 disordered regions span residues 165–186 (RASR…IPSS) and 258–296 (SPRK…PFTP).

The protein belongs to the IQD family. In terms of assembly, binds to multiple calmodulin (CaM) in the presence of Ca(2+) and CaM-like proteins.

It localises to the nucleus. The protein localises to the nuclear body. It is found in the cell membrane. May be involved in cooperative interactions with calmodulins or calmodulin-like proteins. Recruits calmodulin proteins to microtubules, thus being a potential scaffold in cellular signaling and trafficking. May associate with nucleic acids and regulate gene expression at the transcriptional or post-transcriptional level. The chain is Protein IQ-DOMAIN 24 from Arabidopsis thaliana (Mouse-ear cress).